The sequence spans 523 residues: Tyrosine/DOPA decarboxylase 5 (523 aa).

Residues 1 to 19 show a composition bias toward polar residues; it reads MGSLPTDNLESMSICSQNP. 2 disordered regions span residues 1–20 and 47–66; these read MGSL…QNPL and SRSQ…APNH. Lys-321 carries the post-translational modification N6-(pyridoxal phosphate)lysine.

This sequence belongs to the group II decarboxylase family. Homodimer. It depends on pyridoxal 5'-phosphate as a cofactor. In terms of tissue distribution, roots.

The enzyme catalyses L-tyrosine + H(+) = tyramine + CO2. The catalysed reaction is L-dopa + H(+) = dopamine + CO2. It carries out the reaction 5-hydroxy-L-tryptophan + H(+) = serotonin + CO2. May play an important role in providing precursors for alkaloid synthesis in the roots and germinating seedlings. The polypeptide is Tyrosine/DOPA decarboxylase 5 (TYDC5) (Papaver somniferum (Opium poppy)).